Reading from the N-terminus, the 412-residue chain is Peptide chain release factor subunit 1 (412 aa).

The protein belongs to the eukaryotic release factor 1 family. Heterodimer of two subunits, one of which binds GTP.

It localises to the cytoplasm. In terms of biological role, directs the termination of nascent peptide synthesis (translation) in response to the termination codons UAA, UAG and UGA. In Methanobrevibacter smithii (strain ATCC 35061 / DSM 861 / OCM 144 / PS), this protein is Peptide chain release factor subunit 1.